Consider the following 399-residue polypeptide: Acetate kinase (399 aa).

A Mg(2+)-binding site is contributed by N7. K14 contacts ATP. R89 provides a ligand contact to substrate. D146 acts as the Proton donor/acceptor in catalysis. ATP contacts are provided by residues 206 to 210 (HIGSG), 280 to 282 (DFR), and 328 to 332 (GIGEN). Mg(2+) is bound at residue E382.

The protein belongs to the acetokinase family. As to quaternary structure, homodimer. Requires Mg(2+) as cofactor. Mn(2+) is required as a cofactor.

Its subcellular location is the cytoplasm. The catalysed reaction is acetate + ATP = acetyl phosphate + ADP. The protein operates within metabolic intermediate biosynthesis; acetyl-CoA biosynthesis; acetyl-CoA from acetate: step 1/2. In terms of biological role, catalyzes the formation of acetyl phosphate from acetate and ATP. Can also catalyze the reverse reaction. The chain is Acetate kinase from Campylobacter hominis (strain ATCC BAA-381 / DSM 21671 / CCUG 45161 / LMG 19568 / NCTC 13146 / CH001A).